The primary structure comprises 719 residues: MASSSGRVTIQLVDEEAGVGAGRLQLFRGQSYEAIRAACLDSGILFRDPYFPAGPDALGYDQLGPDSEKAKGVKWMRPHEFCAEPKFICEDMSRTDVCQGSLGNCWFLAAAASLTLYPRLLRRVVPPGQDFQHGYAGVFHFQLWQFGRWMDVVVDDRLPVREGKLMFVRSEQRNEFWAPLLEKAYAKLHGSYEVMRGGHMNEAFVDFTGGVGEVLYLRQNSMGLFSALRHALAKESLVGATALSDRGEYRTEEGLVKGHAYSITGTHKVFLGFTKVRLLRLRNPWGCVEWTGAWSDSCPRWDTLPTECRDALLVKKEDGEFWMELRDFLLHFDTVQICSLSPEVLGPSPEGGGWHVHTFQGRWVRGFNSGGSQPNAETFWTNPQFRLTLLEPDEEDDEDEEGPWGGWGAAGARGPARGGRTPKCTVLLSLIQRNRRRLRAKGLTYLTVGFHVFQIPEELLGLWDSPRSHALLPRLLRADRSPLSARRDVTRRCCLRPGHYLVVPSTAHAGDEADFTLRVFSERRHTAVEIDDVISADLQSLQGPYLPLELGLEQLFQELAGEEEELNASQLQALLSIALEPARAHTSTPREIGLRTCEQLLQCFGHGQSLALHHFQQLWGYLLEWQAIFNKFDEDTSGTMNSYELRLALNAAGFHLNNQLTQTLTSRYRDSRLRVDFERFVSCVAHLTCIFCHCSQHLDGGEGVICLTHRQWMEVATFS.

Residues 45–341 (LFRDPYFPAG…FDTVQICSLS (297 aa)) form the Calpain catalytic domain. Catalysis depends on residues Cys-105, His-259, and Asn-283. The tract at residues 342–540 (PEVLGPSPEG…DDVISADLQS (199 aa)) is domain III. Residues 393-402 (DEEDDEDEEG) are compositionally biased toward acidic residues. The segment at 393–418 (DEEDDEDEEGPWGGWGAAGARGPARG) is disordered. The domain IV stretch occupies residues 541 to 719 (LQGPYLPLEL…RQWMEVATFS (179 aa)). One can recognise an EF-hand domain in the interval 620 to 655 (GYLLEWQAIFNKFDEDTSGTMNSYELRLALNAAGFH). Asp-633, Asp-635, Ser-637, Thr-639, and Glu-644 together coordinate Ca(2+).

Belongs to the peptidase C2 family.

Functionally, calcium-regulated non-lysosomal thiol-protease. This Homo sapiens (Human) protein is Calpain-12 (CAPN12).